The following is a 366-amino-acid chain: D-alanine--D-alanine ligase (366 aa).

Residues 145–348 form the ATP-grasp domain; it reads KRLLDDAGLA…YQSLITKLIE (204 aa). 175–230 provides a ligand contact to ATP; that stretch reads VEQLGLPLFIKPANLGSSVGISKVNNEAEFNAALSMAFEYDLKVIIESAIVGREIE. Asp302, Glu315, and Asn317 together coordinate Mg(2+).

The protein belongs to the D-alanine--D-alanine ligase family. The cofactor is Mg(2+). Mn(2+) is required as a cofactor.

It localises to the cytoplasm. It carries out the reaction 2 D-alanine + ATP = D-alanyl-D-alanine + ADP + phosphate + H(+). It participates in cell wall biogenesis; peptidoglycan biosynthesis. In terms of biological role, cell wall formation. In Proteus mirabilis (strain HI4320), this protein is D-alanine--D-alanine ligase.